Here is a 205-residue protein sequence, read N- to C-terminus: SCO2-like protein RC0895 (205 aa).

Cu cation is bound by residues Cys82, Cys86, and His172.

Belongs to the SCO1/2 family.

This is SCO2-like protein RC0895 from Rickettsia conorii (strain ATCC VR-613 / Malish 7).